A 500-amino-acid chain; its full sequence is Cytochrome P450 2D26 (500 aa).

Position 249 is a phosphoserine (serine 249). Heme is bound at residue cysteine 446.

It belongs to the cytochrome P450 family. Requires heme as cofactor.

It is found in the endoplasmic reticulum membrane. The protein localises to the microsome membrane. It carries out the reaction an organic molecule + reduced [NADPH--hemoprotein reductase] + O2 = an alcohol + oxidized [NADPH--hemoprotein reductase] + H2O + H(+). In terms of biological role, cytochromes P450 are a group of heme-thiolate monooxygenases. In liver microsomes, this enzyme is involved in an NADPH-dependent electron transport pathway. It oxidizes a variety of structurally unrelated compounds, including steroids, fatty acids, and xenobiotics. The sequence is that of Cytochrome P450 2D26 (Cyp2d26) from Rattus norvegicus (Rat).